Here is a 254-residue protein sequence, read N- to C-terminus: Sec-independent protein translocase protein TatC (254 aa).

The next 6 membrane-spanning stretches (helical) occupy residues 40–60, 82–104, 125–145, 172–192, 210–230, and 233–253; these read IFLS…FVKP, FFFV…FILY, VVLG…YALI, FVLL…IQVV, FVIL…DPLT, and LLAG…RLLG.

This sequence belongs to the TatC family. Forms a complex with TatA.

The protein localises to the cell inner membrane. Part of the twin-arginine translocation (Tat) system that transports large folded proteins containing a characteristic twin-arginine motif in their signal peptide across membranes. The chain is Sec-independent protein translocase protein TatC from Synechocystis sp. (strain ATCC 27184 / PCC 6803 / Kazusa).